The following is a 790-amino-acid chain: LPS-assembly protein LptD (790 aa).

The N-terminal stretch at 1 to 20 (MRMLRWLILSAFSVAGAVQA) is a signal peptide.

This sequence belongs to the LptD family. Component of the lipopolysaccharide transport and assembly complex. Interacts with LptE and LptA.

The protein resides in the cell outer membrane. Together with LptE, is involved in the assembly of lipopolysaccharide (LPS) at the surface of the outer membrane. The protein is LPS-assembly protein LptD of Bordetella bronchiseptica (strain ATCC BAA-588 / NCTC 13252 / RB50) (Alcaligenes bronchisepticus).